Consider the following 1022-residue polypeptide: Protein trachealess (1022 aa).

The bHLH domain occupies L86–R139. A PAS 1 domain is found at E174 to G244. The interval L239–A289 is disordered. Gly residues predominate over residues S243–M265. A compositionally biased stretch (polar residues) spans H280 to A289. A PAS 2 domain is found at P391–G461. The region spanning T465–R508 is the PAC domain. Disordered regions lie at residues D525–A686, A849–V896, and D962–A996. Composition is skewed to low complexity over residues R578–S587 and P611–V625. The short motif at K629–A636 is the Nuclear localization signal element. Position 673 is a phosphoserine; by PKB/Akt1 (S673). A compositionally biased stretch (polar residues) spans T851 to P864. A compositionally biased stretch (low complexity) spans G987–A996.

Efficient DNA binding requires dimerization with another bHLH protein. Heterodimer with tgo. Post-translationally, ser-673 phosphorylation by PKB/Akt1 is required for nuclear targeting and transcriptional activity. In terms of tissue distribution, trachea, salivary gland ducts, posterior spiracles (Filzkoeper primordia) and a subset of cells in the CNS.

The protein localises to the nucleus. Transcription factor, master regulator of tracheal cell fates in the embryo, necessary for the development of the salivary gland duct, Malpighian tubules and the posterior spiracles. It may induce a general fate of branched tubular structures of epithelial origin. Functions with tgo to regulate expression of btl. The chain is Protein trachealess (trh) from Drosophila melanogaster (Fruit fly).